The sequence spans 1464 residues: ABC transporter G family member 35 (1464 aa).

The tract at residues 1 to 26 (MDAAAEMQKVVSLRRGGGGSSSRGAA) is disordered. An ABC transporter 1 domain is found at 173–446 (ANALGILPNK…FELMGFKCPE (274 aa)). 206–213 (GPPGSGKT) is a binding site for ATP. Residues 524–737 (ELLKANIDRE…AQNAISVNEF (214 aa)) enclose the ABC transmembrane type-2 1 domain. 7 helical membrane-spanning segments follow: residues 542-562 (FVYI…MTVF), 575-595 (GVIF…NGLS), 630-650 (IPMS…VIGF), 662-682 (LLML…GGAA), 686-706 (IVAN…GGFI), 715-735 (WWIW…ISVN), and 774-794 (IGFG…TLAL). In terms of domain architecture, ABC transporter 2 spans 867 to 1119 (LTFDNIKYSV…ELIKYFEGIK (253 aa)). Position 912–919 (912–919 (GVSGAGKT)) interacts with ATP. An ABC transmembrane type-2 2 domain is found at 1192-1406 (NQCLACLWKM…TLYGLVASQF (215 aa)). The next 7 membrane-spanning stretches (helical) occupy residues 1213–1233 (AIRL…FWDL), 1243–1263 (LFNA…LNSQ), 1299–1319 (FPYT…MIGF), 1326–1346 (FFWY…YGMM), 1356–1376 (VASI…GFII), 1387–1407 (WYCW…SQFG), and 1436–1456 (VVAV…GFAI).

This sequence belongs to the ABC transporter superfamily. ABCG family. PDR (TC 3.A.1.205) subfamily.

It is found in the membrane. May be a general defense protein. This Oryza sativa subsp. japonica (Rice) protein is ABC transporter G family member 35.